The chain runs to 340 residues: DNA-directed RNA polymerase subunit alpha (340 aa).

The interval 1–236 (MLSLSKNWNT…EQLQLFIAFE (236 aa)) is alpha N-terminal domain (alpha-NTD). The interval 251–340 (FSPYLLKRVD…LSKRYEDSYN (90 aa)) is alpha C-terminal domain (alpha-CTD).

It belongs to the RNA polymerase alpha chain family. In terms of assembly, homodimer. The RNAP catalytic core consists of 2 alpha, 1 beta, 1 beta' and 1 omega subunit. When a sigma factor is associated with the core the holoenzyme is formed, which can initiate transcription.

The enzyme catalyses RNA(n) + a ribonucleoside 5'-triphosphate = RNA(n+1) + diphosphate. Its function is as follows. DNA-dependent RNA polymerase catalyzes the transcription of DNA into RNA using the four ribonucleoside triphosphates as substrates. In Rickettsia typhi (strain ATCC VR-144 / Wilmington), this protein is DNA-directed RNA polymerase subunit alpha.